The sequence spans 391 residues: Succinate--CoA ligase [GDP-forming] subunit beta, mitochondrial (391 aa).

Positions 5–233 (KKIMADHGVT…NAEFRQKEIF (229 aa)) constitute an ATP-grasp domain. Residues Gln-16, 49 to 51 (GRG), and Leu-105 each bind GTP. 2 residues coordinate Mg(2+): Asn-202 and Asp-216. Substrate is bound by residues Asn-267 and 324 to 326 (GIV).

This sequence belongs to the succinate/malate CoA ligase beta subunit family. GTP-specific subunit beta subfamily. As to quaternary structure, heterodimer of an alpha and a beta subunit. The beta subunit determines specificity for GTP. Mg(2+) is required as a cofactor. Widely expressed. Not present in breast muscle.

The protein localises to the mitochondrion. The catalysed reaction is GTP + succinate + CoA = succinyl-CoA + GDP + phosphate. The protein operates within carbohydrate metabolism; tricarboxylic acid cycle; succinate from succinyl-CoA (ligase route): step 1/1. In terms of biological role, GTP-specific succinyl-CoA synthetase functions in the citric acid cycle (TCA), coupling the hydrolysis of succinyl-CoA to the synthesis of GTP and thus represents the only step of substrate-level phosphorylation in the TCA. The beta subunit provides nucleotide specificity of the enzyme and binds the substrate succinate, while the binding sites for coenzyme A and phosphate are found in the alpha subunit. The protein is Succinate--CoA ligase [GDP-forming] subunit beta, mitochondrial of Columba livia (Rock dove).